A 133-amino-acid chain; its full sequence is Mediator of RNA polymerase II transcription subunit 10 (133 aa).

The segment covering 1–13 has biased composition (polar residues); the sequence is MSTEASTGETPEF. Residues 1–28 are disordered; it reads MSTEASTGETPEFQSYDHRGSPTQEAMK. Positions 15 to 28 are enriched in basic and acidic residues; it reads SYDHRGSPTQEAMK.

The protein belongs to the Mediator complex subunit 10 family. As to quaternary structure, component of the Mediator complex.

The protein localises to the nucleus. Component of the Mediator complex, a coactivator involved in the regulated transcription of nearly all RNA polymerase II-dependent genes. Mediator functions as a bridge to convey information from gene-specific regulatory proteins to the basal RNA polymerase II transcription machinery. Mediator is recruited to promoters by direct interactions with regulatory proteins and serves as a scaffold for the assembly of a functional preinitiation complex with RNA polymerase II and the general transcription factors. This chain is Mediator of RNA polymerase II transcription subunit 10 (NUT2), found in Phaeosphaeria nodorum (strain SN15 / ATCC MYA-4574 / FGSC 10173) (Glume blotch fungus).